The chain runs to 271 residues: Type III pantothenate kinase (271 aa).

Residue 6-13 (DVRNTNIV) coordinates ATP. Position 109-112 (109-112 (GADR)) interacts with substrate. Aspartate 111 functions as the Proton acceptor in the catalytic mechanism. Aspartate 131 is a K(+) binding site. Threonine 134 serves as a coordination point for ATP. Threonine 186 contacts substrate.

Belongs to the type III pantothenate kinase family. Homodimer. NH4(+) serves as cofactor. Requires K(+) as cofactor.

Its subcellular location is the cytoplasm. It catalyses the reaction (R)-pantothenate + ATP = (R)-4'-phosphopantothenate + ADP + H(+). Its pathway is cofactor biosynthesis; coenzyme A biosynthesis; CoA from (R)-pantothenate: step 1/5. Functionally, catalyzes the phosphorylation of pantothenate (Pan), the first step in CoA biosynthesis. The chain is Type III pantothenate kinase from Rhodococcus opacus (strain B4).